Here is a 196-residue protein sequence, read N- to C-terminus: Pyridoxal 5'-phosphate synthase subunit PdxT (196 aa).

An L-glutamine-binding site is contributed by 47–49 (GES). Residue C79 is the Nucleophile of the active site. L-glutamine-binding positions include R106 and 134–135 (IR). Catalysis depends on charge relay system residues H170 and E172.

Belongs to the glutaminase PdxT/SNO family. In terms of assembly, in the presence of PdxS, forms a dodecamer of heterodimers. Only shows activity in the heterodimer.

It carries out the reaction aldehydo-D-ribose 5-phosphate + D-glyceraldehyde 3-phosphate + L-glutamine = pyridoxal 5'-phosphate + L-glutamate + phosphate + 3 H2O + H(+). The enzyme catalyses L-glutamine + H2O = L-glutamate + NH4(+). It functions in the pathway cofactor biosynthesis; pyridoxal 5'-phosphate biosynthesis. In terms of biological role, catalyzes the hydrolysis of glutamine to glutamate and ammonia as part of the biosynthesis of pyridoxal 5'-phosphate. The resulting ammonia molecule is channeled to the active site of PdxS. This Bacillus cereus (strain B4264) protein is Pyridoxal 5'-phosphate synthase subunit PdxT.